We begin with the raw amino-acid sequence, 377 residues long: Flagellar P-ring protein (377 aa).

Positions 1–30 (MLARFLSSLLKASVTALAVVVAFGFAANFA) are cleaved as a signal peptide.

This sequence belongs to the FlgI family. The basal body constitutes a major portion of the flagellar organelle and consists of four rings (L,P,S, and M) mounted on a central rod.

Its subcellular location is the periplasm. The protein localises to the bacterial flagellum basal body. In terms of biological role, assembles around the rod to form the L-ring and probably protects the motor/basal body from shearing forces during rotation. This is Flagellar P-ring protein from Cupriavidus pinatubonensis (strain JMP 134 / LMG 1197) (Cupriavidus necator (strain JMP 134)).